A 944-amino-acid chain; its full sequence is MLKYALPLYPIAESTDESWSYEHLDKLTTYAEFNETQLLYSEDDDRDHNNETRKPMPHQILVANYTTPRSPIDGIIVIHGVGTGKTLTAILAMINNITAGHDQGMKRGLVLTPNRAVMNSFRNELNCYYRSRFSDRHLNDFEIDRYLSKTFFFNTITAFANTVSRTSDVVLHKEWNATFVVIDEAHDLSVQGVDYPKINGFLKLLTSRKVILLTATPMRNNLSDLVPLHNLLMKLSTHDITVEQFNRDLVTRENCAEYVCARESPTEYFLRKFAGLVSYLPSIVDVNEVDIVNVGERGLYGLRNTVIVVHDMSDVMSATYHYAGAGERSDRDVALLRQRQICRFVFPDGTYGAEGYATWMDNKTGRPTRKFLDMLRGGTGTSREDILKNVAKYSPRYAWIAKSVIDAAERGEKSMVYDDLVTGSGLLVFAAVLEALGLERGYGRGARSFLCLTREVMTVPSIVSALKIFNDRKNVKGANVAIILGSRVIAEGITLKDVIHEHVVAHWNDAETEQIIGRGIRYQSHAYTIADWGSDAKPNVFVYRHATIDSRKKNIKTVDILMYATSEAKRKNIDGALRALSSVALTCRNSNNTFVKSVYRGRYTGRNITNDNTIPLDAPRVTKSFIAQLDQLFDYRNQNVVVKVDSLLKMFNIDPNSKYSLELLFVIMNTIQKHGQLDVDKYIDCNGQYISISKCVDEFRQRPTFVYPFVLDNVSLYGLDVYRDTLAKDIISPLILLDAERHTGGLYPMTRLPVIVIQGLLELAISTQGTKDPYDTLNKMIQYYGTSTNGDNDIRAAVWLATTTGDDSGYRILNEHSGSWVSCPSSMVPFVQAMKSSVEAQLNNDMLAKNLKYYGVLHPSTDDFCIKTVSQNTPTNRRCVMTGRKCVTWSGEKLKELARDIGIDTGDSSSVQNRKTICYNIRSKLEELGAVITDVTCGVQAKRK.

One can recognise a Helicase ATP-binding domain in the interval 66–235; that stretch reads TTPRSPIDGI…VPLHNLLMKL (170 aa). 79–86 contacts ATP; it reads HGVGTGKT. Residues 183–186 carry the DEAH box motif; the sequence is DEAH. The Helicase C-terminal domain maps to 451–523; that stretch reads CLTREVMTVP…QIIGRGIRYQ (73 aa).

This sequence belongs to the DEAD box helicase family. DEAH subfamily.

The catalysed reaction is ATP + H2O = ADP + phosphate + H(+). The polypeptide is Putative ATP-dependent RNA helicase (Heliothis virescens ascovirus 3e (HvAV-3e)).